Consider the following 141-residue polypeptide: Large ribosomal subunit protein uL16 (141 aa).

The protein belongs to the universal ribosomal protein uL16 family. As to quaternary structure, part of the 50S ribosomal subunit.

Its function is as follows. Binds 23S rRNA and is also seen to make contacts with the A and possibly P site tRNAs. The polypeptide is Large ribosomal subunit protein uL16 (Campylobacter lari (strain RM2100 / D67 / ATCC BAA-1060)).